The following is a 162-amino-acid chain: UPF0305 protein MmarC6_0221 (162 aa).

The protein belongs to the UPF0305 family.

The protein is UPF0305 protein MmarC6_0221 of Methanococcus maripaludis (strain C6 / ATCC BAA-1332).